A 108-amino-acid chain; its full sequence is SPbeta prophage-derived uncharacterized HTH-type transcriptional regulator YonR (108 aa).

The region spanning 6 to 60 (LKKCRTSKGYSQQRMADFLGITRQGYGKYEIGKAEPDLKTLTKLSNILGVSTDFL) is the HTH cro/C1-type domain. The H-T-H motif DNA-binding region spans 17–36 (QQRMADFLGITRQGYGKYEI).

The chain is SPbeta prophage-derived uncharacterized HTH-type transcriptional regulator YonR (yonR) from Bacillus subtilis (strain 168).